The following is a 254-amino-acid chain: Probable transcriptional regulatory protein Saro_0419 (254 aa).

Over residues 1–14 (MAGHSKFKNIMHRK) the composition is skewed to basic residues. Residues 1–22 (MAGHSKFKNIMHRKGAQDKKRS) are disordered.

The protein belongs to the TACO1 family.

The protein resides in the cytoplasm. This Novosphingobium aromaticivorans (strain ATCC 700278 / DSM 12444 / CCUG 56034 / CIP 105152 / NBRC 16084 / F199) protein is Probable transcriptional regulatory protein Saro_0419.